The following is a 205-amino-acid chain: Protease (205 aa).

Active-site residues include His-55, Asp-72, and Cys-122.

This sequence belongs to the peptidase C5 family. Interacts with protease cofactor pVI-C; this interaction is necessary for protease activation.

The protein resides in the virion. It localises to the host nucleus. The catalysed reaction is Cleaves proteins of the adenovirus and its host cell at two consensus sites: -Yaa-Xaa-Gly-Gly-|-Xaa- and -Yaa-Xaa-Gly-Xaa-|-Gly- (in which Yaa is Met, Ile or Leu, and Xaa is any amino acid).. With respect to regulation, requires DNA and protease cofactor for maximal activation. Inside nascent virions, becomes partially activated by binding to the viral DNA, allowing it to cleave the cofactor that binds to the protease and fully activates it. Actin, like the viral protease cofactor, seems to act as a cofactor in the cleavage of cytokeratin 18 and of actin itself. Its function is as follows. Cleaves viral precursor proteins (pTP, pIIIa, pVI, pVII, pVIII, and pX) inside newly assembled particles giving rise to mature virions. Protease complexed to its cofactor slides along the viral DNA to specifically locate and cleave the viral precursors. Mature virions have a weakened organization compared to the unmature virions, thereby facilitating subsequent uncoating. Without maturation, the particle lacks infectivity and is unable to uncoat. Late in adenovirus infection, in the cytoplasm, may participate in the cytoskeleton destruction. Cleaves host cell cytoskeletal keratins K7 and K18. This is Protease from Galliformes (FAdV-8).